A 206-amino-acid chain; its full sequence is N-(5'-phosphoribosyl)anthranilate isomerase (206 aa).

Belongs to the TrpF family.

It carries out the reaction N-(5-phospho-beta-D-ribosyl)anthranilate = 1-(2-carboxyphenylamino)-1-deoxy-D-ribulose 5-phosphate. It participates in amino-acid biosynthesis; L-tryptophan biosynthesis; L-tryptophan from chorismate: step 3/5. This Nitrosococcus oceani (strain ATCC 19707 / BCRC 17464 / JCM 30415 / NCIMB 11848 / C-107) protein is N-(5'-phosphoribosyl)anthranilate isomerase.